The sequence spans 151 residues: UPF0208 membrane protein YPDSF_1972 (151 aa).

Helical transmembrane passes span 46-66 (FGIR…IALG) and 69-89 (LGPA…GLWW).

The protein belongs to the UPF0208 family.

It is found in the cell inner membrane. In Yersinia pestis (strain Pestoides F), this protein is UPF0208 membrane protein YPDSF_1972.